The primary structure comprises 258 residues: Ribosomal RNA small subunit methyltransferase J (258 aa).

Residues 111–112 (RD), 127–128 (ER), and Asp-179 each bind S-adenosyl-L-methionine.

The protein belongs to the methyltransferase superfamily. RsmJ family.

The protein localises to the cytoplasm. It carries out the reaction guanosine(1516) in 16S rRNA + S-adenosyl-L-methionine = N(2)-methylguanosine(1516) in 16S rRNA + S-adenosyl-L-homocysteine + H(+). Functionally, specifically methylates the guanosine in position 1516 of 16S rRNA. This is Ribosomal RNA small subunit methyltransferase J from Alteromonas mediterranea (strain DSM 17117 / CIP 110805 / LMG 28347 / Deep ecotype).